We begin with the raw amino-acid sequence, 208 residues long: Large ribosomal subunit protein bL25 (208 aa).

The disordered stretch occupies residues 188-208 (AVETETEEETTTGESPAQPAE).

The protein belongs to the bacterial ribosomal protein bL25 family. CTC subfamily. As to quaternary structure, part of the 50S ribosomal subunit; part of the 5S rRNA/L5/L18/L25 subcomplex. Contacts the 5S rRNA. Binds to the 5S rRNA independently of L5 and L18.

Its function is as follows. This is one of the proteins that binds to the 5S RNA in the ribosome where it forms part of the central protuberance. This Moorella thermoacetica (strain ATCC 39073 / JCM 9320) protein is Large ribosomal subunit protein bL25.